Reading from the N-terminus, the 860-residue chain is Leucine--tRNA ligase (860 aa).

Positions 42 to 52 (PYPSGRLHMGH) match the 'HIGH' region motif. A 'KMSKS' region motif is present at residues 619 to 623 (KMSKS). An ATP-binding site is contributed by Lys-622.

This sequence belongs to the class-I aminoacyl-tRNA synthetase family.

Its subcellular location is the cytoplasm. It catalyses the reaction tRNA(Leu) + L-leucine + ATP = L-leucyl-tRNA(Leu) + AMP + diphosphate. The protein is Leucine--tRNA ligase of Pectobacterium carotovorum subsp. carotovorum (strain PC1).